A 173-amino-acid chain; its full sequence is Large ribosomal subunit protein uL10 (173 aa).

Belongs to the universal ribosomal protein uL10 family. Part of the ribosomal stalk of the 50S ribosomal subunit. The N-terminus interacts with L11 and the large rRNA to form the base of the stalk. The C-terminus forms an elongated spine to which L12 dimers bind in a sequential fashion forming a multimeric L10(L12)X complex.

Forms part of the ribosomal stalk, playing a central role in the interaction of the ribosome with GTP-bound translation factors. This Cupriavidus pinatubonensis (strain JMP 134 / LMG 1197) (Cupriavidus necator (strain JMP 134)) protein is Large ribosomal subunit protein uL10.